The primary structure comprises 314 residues: Mevalonate kinase (314 aa).

Residue 103 to 109 (GLGTSAA) participates in ATP binding. Catalysis depends on D150, which acts as the Proton acceptor.

The protein belongs to the GHMP kinase family. Mevalonate kinase subfamily. In terms of assembly, homodimer. Requires Mg(2+) as cofactor.

The protein localises to the cytoplasm. The catalysed reaction is (R)-mevalonate + ATP = (R)-5-phosphomevalonate + ADP + H(+). It participates in isoprenoid biosynthesis; isopentenyl diphosphate biosynthesis via mevalonate pathway; isopentenyl diphosphate from (R)-mevalonate: step 1/3. Its function is as follows. Catalyzes the phosphorylation of (R)-mevalonate (MVA) to (R)-mevalonate 5-phosphate (MVAP). Functions in the mevalonate (MVA) pathway leading to isopentenyl diphosphate (IPP), a key precursor for the biosynthesis of isoprenoid compounds such as archaeal membrane lipids. In Saccharolobus solfataricus (strain ATCC 35092 / DSM 1617 / JCM 11322 / P2) (Sulfolobus solfataricus), this protein is Mevalonate kinase.